Consider the following 369-residue polypeptide: Molybdenum import ATP-binding protein ModC 1 (369 aa).

Residues 10 to 240 (KGYIEVAFNG…PALASRSEAA (231 aa)) form the ABC transporter domain. 42–49 (GPPGCGKT) serves as a coordination point for ATP. A Mop domain is found at 297 to 367 (ASSILNVFRA…ELCGKLGDDG (71 aa)).

The protein belongs to the ABC transporter superfamily. Molybdate importer (TC 3.A.1.8) family. As to quaternary structure, the complex is composed of two ATP-binding proteins (ModC), two transmembrane proteins (ModB) and a solute-binding protein (ModA).

Its subcellular location is the cell inner membrane. The catalysed reaction is molybdate(out) + ATP + H2O = molybdate(in) + ADP + phosphate + H(+). Its function is as follows. Part of the ABC transporter complex ModABC involved in molybdenum import. Responsible for energy coupling to the transport system. The protein is Molybdenum import ATP-binding protein ModC 1 of Bradyrhizobium diazoefficiens (strain JCM 10833 / BCRC 13528 / IAM 13628 / NBRC 14792 / USDA 110).